The following is a 122-amino-acid chain: Small ribosomal subunit protein bS6 (122 aa).

A disordered region spans residues 96 to 122 (ETAPSPMMKAVQKEDAAKSHRTEAPAA). Residues 106–122 (VQKEDAAKSHRTEAPAA) are compositionally biased toward basic and acidic residues.

This sequence belongs to the bacterial ribosomal protein bS6 family.

In terms of biological role, binds together with bS18 to 16S ribosomal RNA. The chain is Small ribosomal subunit protein bS6 from Herminiimonas arsenicoxydans.